Reading from the N-terminus, the 283-residue chain is Ribosomal RNA small subunit methyltransferase A (283 aa).

Asn-22, Leu-24, Gly-49, Glu-70, and Asn-113 together coordinate S-adenosyl-L-methionine.

The protein belongs to the class I-like SAM-binding methyltransferase superfamily. rRNA adenine N(6)-methyltransferase family. RsmA subfamily.

It is found in the cytoplasm. The catalysed reaction is adenosine(1518)/adenosine(1519) in 16S rRNA + 4 S-adenosyl-L-methionine = N(6)-dimethyladenosine(1518)/N(6)-dimethyladenosine(1519) in 16S rRNA + 4 S-adenosyl-L-homocysteine + 4 H(+). Specifically dimethylates two adjacent adenosines (A1518 and A1519) in the loop of a conserved hairpin near the 3'-end of 16S rRNA in the 30S particle. May play a critical role in biogenesis of 30S subunits. The polypeptide is Ribosomal RNA small subunit methyltransferase A (Myxococcus xanthus (strain DK1622)).